Reading from the N-terminus, the 586-residue chain is Eukaryotic translation initiation factor 3 subunit D (586 aa).

A disordered region spans residues 107–154 (FGRGGGTVFRGRAQRGGAGQRGGRAGFQRVGAGRGQGGDRYYDNRGAR). Gly residues predominate over residues 108–131 (GRGGGTVFRGRAQRGGAGQRGGRA). Positions 301-315 (SLDLVTVNENAADAP) are RNA gate. Residues 566 to 577 (FEEDDEAAEEEQ) are compositionally biased toward acidic residues. Positions 566 to 586 (FEEDDEAAEEEQEAKGEVEEA) are disordered.

The protein belongs to the eIF-3 subunit D family. Component of the eukaryotic translation initiation factor 3 (eIF-3) complex.

It localises to the cytoplasm. Its function is as follows. mRNA cap-binding component of the eukaryotic translation initiation factor 3 (eIF-3) complex, which is involved in protein synthesis of a specialized repertoire of mRNAs and, together with other initiation factors, stimulates binding of mRNA and methionyl-tRNAi to the 40S ribosome. The eIF-3 complex specifically targets and initiates translation of a subset of mRNAs involved in cell proliferation. In the eIF-3 complex, eif3d specifically recognizes and binds the 7-methylguanosine cap of a subset of mRNAs. This chain is Eukaryotic translation initiation factor 3 subunit D, found in Emericella nidulans (strain FGSC A4 / ATCC 38163 / CBS 112.46 / NRRL 194 / M139) (Aspergillus nidulans).